A 176-amino-acid polypeptide reads, in one-letter code: Nicotinamide-nucleotide adenylyltransferase (176 aa).

It belongs to the archaeal NMN adenylyltransferase family.

The protein resides in the cytoplasm. It carries out the reaction beta-nicotinamide D-ribonucleotide + ATP + H(+) = diphosphate + NAD(+). Its pathway is cofactor biosynthesis; NAD(+) biosynthesis; NAD(+) from nicotinamide D-ribonucleotide: step 1/1. The polypeptide is Nicotinamide-nucleotide adenylyltransferase (Halorubrum lacusprofundi (strain ATCC 49239 / DSM 5036 / JCM 8891 / ACAM 34)).